The chain runs to 695 residues: NAD(P)H-quinone oxidoreductase subunit 5, chloroplastic (695 aa).

Transmembrane regions (helical) follow at residues 1–21, 32–52, 81–101, 117–137, 139–159, 177–197, 211–231, 250–270, 278–298, 319–339, 346–366, 388–408, 417–437, 535–555, and 594–614; these read WIIPFIPLPVPILIGAGLILF, WAFQSVLLLSIVMIFSIYLSI, IDPLTSIMXXLITTVGIMVLI, FAYMSFFSTSMLGLVTSSNLI, IYIFWELVGLCSYLLIGFWFT, GDFGLLLGILGFYWITGSFEF, NEVNFLFVTLCAVLLFVGAVA, TPISALIHAATMVAAGIFLVA, VIPYIMYLISIIGIITVLLGA, LGYMMLALGMGSYRSALFHLI, ALLFLGSGSIIHSMETIVGYS, ITFLLGTLSLCGIPPLACFWS, WLYSPIFAIIAWATAGLTAFY, LFPIFVLGLFTLFVGSIGIPF, and VLSVSIAYFGIFIASFLYKPI.

Belongs to the complex I subunit 5 family. In terms of assembly, NDH is composed of at least 16 different subunits, 5 of which are encoded in the nucleus.

The protein resides in the plastid. Its subcellular location is the chloroplast thylakoid membrane. The catalysed reaction is a plastoquinone + NADH + (n+1) H(+)(in) = a plastoquinol + NAD(+) + n H(+)(out). The enzyme catalyses a plastoquinone + NADPH + (n+1) H(+)(in) = a plastoquinol + NADP(+) + n H(+)(out). NDH shuttles electrons from NAD(P)H:plastoquinone, via FMN and iron-sulfur (Fe-S) centers, to quinones in the photosynthetic chain and possibly in a chloroplast respiratory chain. The immediate electron acceptor for the enzyme in this species is believed to be plastoquinone. Couples the redox reaction to proton translocation, and thus conserves the redox energy in a proton gradient. The chain is NAD(P)H-quinone oxidoreductase subunit 5, chloroplastic (ndhF) from Capsicum baccatum (Peruvian pepper).